A 353-amino-acid polypeptide reads, in one-letter code: Guanine nucleotide-binding protein G(q) subunit alpha (353 aa).

2 S-palmitoyl cysteine lipidation sites follow: Cys-3 and Cys-4. One can recognise a G-alpha domain in the interval 32 to 353; the sequence is RELKLLLLGT…QLNLKEYNLV (322 aa). The tract at residues 35–48 is G1 motif; that stretch reads KLLLLGTGESGKST. GTP-binding positions include 40–47, 174–180, 199–203, 268–271, and Ala-325; these read GTGESGKS, LRVRVPT, DVGGQ, and NKKD. The Mg(2+) site is built by Ser-47 and Thr-180. Positions 172-180 are G2 motif; the sequence is DILRVRVPT. The tract at residues 195-204 is G3 motif; the sequence is FRMVDVGGQR. The G4 motif stretch occupies residues 264–271; it reads ILFLNKKD. A G5 motif region spans residues 323–328; that stretch reads TCATDT.

The protein belongs to the G-alpha family. G(q) subfamily. As to quaternary structure, g proteins are composed of 3 units; alpha, beta and gamma. The alpha chain contains the guanine nucleotide binding site.

In terms of biological role, guanine nucleotide-binding proteins (G proteins) are involved as modulators or transducers in various transmembrane signaling systems. The sequence is that of Guanine nucleotide-binding protein G(q) subunit alpha from Lymnaea stagnalis (Great pond snail).